The sequence spans 240 residues: Ribosomal RNA large subunit methyltransferase E (240 aa).

The span at 1 to 13 (MAKKPGSQNTSGR) shows a compositional bias: polar residues. Positions 1 to 20 (MAKKPGSQNTSGRGQRDLKV) are disordered. S-adenosyl-L-methionine is bound by residues glycine 85, tryptophan 87, aspartate 113, aspartate 129, and aspartate 153. The active-site Proton acceptor is the lysine 193.

This sequence belongs to the class I-like SAM-binding methyltransferase superfamily. RNA methyltransferase RlmE family.

The protein localises to the cytoplasm. It catalyses the reaction uridine(2552) in 23S rRNA + S-adenosyl-L-methionine = 2'-O-methyluridine(2552) in 23S rRNA + S-adenosyl-L-homocysteine + H(+). Functionally, specifically methylates the uridine in position 2552 of 23S rRNA at the 2'-O position of the ribose in the fully assembled 50S ribosomal subunit. This chain is Ribosomal RNA large subunit methyltransferase E, found in Roseobacter denitrificans (strain ATCC 33942 / OCh 114) (Erythrobacter sp. (strain OCh 114)).